Here is a 202-residue protein sequence, read N- to C-terminus: Arenicin-1 (202 aa).

Positions 1–25 are cleaved as a signal peptide; the sequence is MTSTQSVAVCATLILAIFCVNDIHC. Residues 26 to 181 constitute a propeptide that is removed on maturation; it reads DPIAEARAAA…SGDNNEPEKR (156 aa). Residues 73 to 168 form the BRICHOS domain; sequence GDGVEGSVMV…ACQGKSVYWL (96 aa). 2 disulfides stabilise this stretch: Cys100-Cys160 and Cys184-Cys201.

In terms of biological role, has antimicrobial activity against the Gram-negative bacteria E.coli and P.mirabilis, the Gram-positive bacterium L.monocytogenes and the yeast C.albicans. In Arenicola marina (Lugworm), this protein is Arenicin-1.